Consider the following 144-residue polypeptide: Large ribosomal subunit protein uL15 (144 aa).

The segment at 1–49 (MKLNTLSPAAGAKSAAKRVGRGIGSGLGKTAGRGHKGQKSRSGGGVRVG) is disordered. The span at 21-31 (RGIGSGLGKTA) shows a compositional bias: gly residues.

This sequence belongs to the universal ribosomal protein uL15 family. In terms of assembly, part of the 50S ribosomal subunit.

Binds to the 23S rRNA. The polypeptide is Large ribosomal subunit protein uL15 (Shewanella loihica (strain ATCC BAA-1088 / PV-4)).